We begin with the raw amino-acid sequence, 525 residues long: Heat shock factor protein 1 (525 aa).

The residue at position 1 (Met-1) is an N-acetylmethionine. Positions 15-120 (VPAFLTKLWT…LLENIKRKVT (106 aa)) are DNA-binding domain. Lys-80 carries the N6-acetyllysine modification. The residue at position 91 (Lys-91) is an N6-acetyllysine; alternate. Lys-91 is covalently cross-linked (Glycyl lysine isopeptide (Lys-Gly) (interchain with G-Cter in SUMO2); alternate). Lys-118 is modified (N6-acetyllysine). A Phosphoserine; by MAPKAPK2 modification is found at Ser-121. Glycyl lysine isopeptide (Lys-Gly) (interchain with G-Cter in SUMO2) cross-links involve residues Lys-126 and Lys-131. A hydrophobic repeat HR-A/B region spans residues 130–203 (IKIRQDSVTR…ISLVQSNRIL (74 aa)). Thr-142 is subject to Phosphothreonine; by CK2. 2 positions are modified to N6-acetyllysine: Lys-150 and Lys-188. Positions 203–224 (LGVKRKIPLMLSDSNSAHSVPK) are d domain. Residue Lys-208 is modified to N6-acetyllysine; alternate. Residue Lys-208 forms a Glycyl lysine isopeptide (Lys-Gly) (interchain with G-Cter in SUMO2); alternate linkage. A Phosphoserine; by PLK1 modification is found at Ser-216. The interval 221–310 (SVPKYGRQYS…PPSPPHSPRV (90 aa)) is regulatory domain. Lys-224 participates in a covalent cross-link: Glycyl lysine isopeptide (Lys-Gly) (interchain with G-Cter in SUMO2). Position 230 is a phosphoserine; by CAMK2A (Ser-230). Disordered regions lie at residues 272–327 (APTS…PLSP) and 340–365 (PTPAASNTAPMDTTGAQAPALPTPST). 2 positions are modified to phosphoserine: Ser-275 and Ser-292. An N6-acetyllysine; alternate modification is found at Lys-298. A Glycyl lysine isopeptide (Lys-Gly) (interchain with G-Cter in SUMO2); alternate cross-link involves residue Lys-298. Residue Lys-298 forms a Glycyl lysine isopeptide (Lys-Gly) (interchain with G-Cter in SUMO); alternate linkage. Phosphoserine is present on residues Ser-303, Ser-307, Ser-314, and Ser-319. Ser-320 bears the Phosphoserine; by PKA mark. Thr-323 is modified (phosphothreonine). The residue at position 326 (Ser-326) is a Phosphoserine; by MAPK12. Positions 343–355 (AASNTAPMDTTGA) are enriched in polar residues. Ser-345 bears the Phosphoserine mark. The transactivation domain stretch occupies residues 367 to 525 (EKCLSVACLD…PHKAKDPTVS (159 aa)). The segment at 380 to 405 (LSDHLDAMDSNLDNLQTMLTSHGFSV) is hydrophobic repeat HR-C. The 9aaTAD motif lies at 408–416 (SALLDLFSP). Ser-415 is subject to Phosphoserine; by PLK1. A Phosphoserine modification is found at Ser-440. 2 disordered regions span residues 441 to 460 (PQEPPRPIEAENSNPDSGKQ) and 495 to 525 (YFSEGDDYTDDPTISLLTGTEPHKAKDPTVS). Residues 515-525 (EPHKAKDPTVS) are compositionally biased toward basic and acidic residues. Lys-520 is modified (N6-acetyllysine).

It belongs to the HSF family. In terms of assembly, monomer; cytoplasmic latent and transcriptionally inactive monomeric form in unstressed cells. Homotrimer; in response to stress, such as heat shock, homotrimerizes and translocates into the nucleus, binds to heat shock element (HSE) sequences in promoter of heat shock protein (HSP) genes and acquires transcriptional ability. Interacts (via monomeric form) with FKBP4; this interaction occurs in unstressed cells. Associates (via monomeric form) with HSP90 proteins in a multichaperone complex in unnstressed cell; this association maintains HSF1 in a non-DNA-binding and transcriptional inactive form by preventing HSF1 homotrimerization. Homotrimeric transactivation activity is modulated by protein-protein interactions and post-translational modifications. Interacts with HSP90AA1; this interaction is decreased in a IER5-dependent manner, promoting HSF1 accumulation in the nucleus, homotrimerization and DNA-binding activities. Part (via regulatory domain in the homotrimeric form) of a large heat shock-induced HSP90-dependent multichaperone complex at least composed of FKBP4, FKBP5, HSP90 proteins, PPID, PPP5C and PTGES3; this association maintains the HSF1 homotrimeric DNA-bound form in a transcriptionally inactive form. Interacts with BAG3 (via BAG domain); this interaction occurs in normal and heat-shocked cells promoting nuclear shuttling of HSF1 in a BAG3-dependent manner. Interacts (via homotrimeric and hyperphosphorylated form) with FKBP4; this interaction occurs upon heat shock in a HSP90-dependent multichaperone complex. Interacts (via homotrimeric form preferentially) with EEF1A proteins. In heat shocked cells, stress-denatured proteins compete with HSF1 homotrimeric DNA-bound form for association of the HSP90-dependent multichaperone complex, and hence alleviating repression of HSF1-mediated transcriptional activity. Interacts (via homotrimeric form preferentially) with DAXX; this interaction relieves homotrimeric HSF1 from repression of its transcriptional activity by HSP90-dependent multichaperone complex upon heat shock. Interacts (via D domain and preferentially with hyperphosphorylated form) with JNK1; this interaction occurs under both normal growth conditions and immediately upon heat shock. Interacts (via D domain and preferentially with hyperphosphorylated form) with MAPK3; this interaction occurs upon heat shock. Interacts with IER5 (via central region); this interaction promotes PPP2CA-induced dephosphorylation on Ser-121, Ser-307, Ser-314 and Thr-323 and HSF1 transactivation activity. Found in a ribonucleoprotein complex composed of the HSF1 homotrimeric form, translation elongation factor eEF1A proteins and non-coding RNA heat shock RNA-1 (HSR1); this complex occurs upon heat shock and stimulates HSF1 DNA-binding activity. Interacts (via transactivation domain) with HSPA1A/HSP70 and DNAJB1; these interactions result in the inhibition of heat shock- and HSF1-induced transcriptional activity during the attenuation and recovery phase from heat shock. Interacts (via Ser-303 and Ser-307 phosphorylated form) with YWHAE; this interaction promotes HSF1 sequestration in the cytoplasm in an ERK-dependent manner. Found in a complex with IER5 and PPP2CA. Interacts with TPR; this interaction increases upon heat shock and stimulates export of HSP70 mRNA. Interacts with SYMPK (via N-terminus) and CSTF2; these interactions occur upon heat shock. Interacts (via transactivation domain) with HSPA8. Interacts with EEF1D; this interaction occurs at heat shock promoter element (HSE) sequences. Interacts with MAPKAPK2. Interacts with PRKACA/PKA. Interacts (via transactivation domain) with GTF2A2. Interacts (via transactivation domain) with GTF2B. Interacts (via transactivation domain) with TBP. Interacts with CDK9, CCNT1 and EP300. Interacts (via N-terminus) with XRCC5 (via N-terminus) and XRCC6 (via N-terminus); these interactions are direct and prevent XRCC5/XRCC6 heterodimeric binding and non-homologous end joining (NHEJ) repair activities induced by ionizing radiation (IR). Interacts with PLK1; this interaction occurs during the early mitotic period, increases upon heat shock but does not modulate neither HSF1 homotrimerization and DNA-binding activities. Interacts (via Ser-216 phosphorylated form) with CDC20; this interaction occurs in mitosis in a MAD2L1-dependent manner and prevents PLK1-stimulated degradation of HSF1 by blocking the recruitment of the SCF(BTRC) ubiquitin ligase complex. Interacts with MAD2L1; this interaction occurs in mitosis. Interacts with BTRC; this interaction occurs during mitosis, induces its ubiquitin-dependent degradation following stimulus-dependent phosphorylation at Ser-216, a process inhibited by CDC20. Interacts with HSP90AA1 and HSP90AB1. Forms a complex with TTC5/STRAP and p300/EP300; these interactions augment chromatin-bound HSF1 and p300/EP300 histone acetyltransferase activity. Phosphorylated. Phosphorylated in unstressed cells; this phosphorylation is constitutive and implicated in the repression of HSF1 transcriptional activity. Phosphorylated on Ser-121 by MAPKAPK2; this phosphorylation promotes interaction with HSP90 proteins and inhibits HSF1 homotrimerization, DNA-binding and transactivation activities. Phosphorylation on Ser-303 by GSK3B/GSK3-beat and on Ser-307 by MAPK3 within the regulatory domain is involved in the repression of HSF1 transcriptional activity and occurs in a RAF1-dependent manner. Phosphorylation on Ser-303 and Ser-307 increases HSF1 nuclear export in a YWHAE- and XPO1/CRM1-dependent manner. Phosphorylation on Ser-307 is a prerequisite for phosphorylation on Ser-303. According to, Ser-303 is not phosphorylated in unstressed cells. Phosphorylated on Ser-415 by PLK1; phosphorylation promotes nuclear translocation upon heat shock. Hyperphosphorylated upon heat shock and during the attenuation and recovery phase period of the heat shock response. Phosphorylated on Thr-142; this phosphorylation increases HSF1 transactivation activity upon heat shock. Phosphorylation on Ser-230 by CAMK2A; this phosphorylation enhances HSF1 transactivation activity upon heat shock. Phosphorylation on Ser-326 by MAPK12; this phosphorylation enhances HSF1 nuclear translocation, homotrimerization and transactivation activities upon heat shock. Phosphorylated on Ser-320 by PRKACA/PKA; this phosphorylation promotes nuclear localization and transcriptional activity upon heat shock. Phosphorylated by MAPK8; this phosphorylation occurs upon heat shock, induces HSF1 translocation into nuclear stress bodies and negatively regulates transactivation activity. Neither basal nor stress-inducible phosphorylation on Ser-230, Ser-292, Ser-303, Ser-307, Ser-314, Ser-319, Ser-320, Thr-323, Ser-326, Ser-338, Ser-345, Ser-364 and Thr-365 within the regulatory domain is involved in the regulation of HSF1 subcellular localization or DNA-binding activity; however, it negatively regulates HSF1 transactivation activity. Phosphorylated on Ser-216 by PLK1 in the early mitotic period; this phosphorylation regulates HSF1 localization to the spindle pole, the recruitment of the SCF(BTRC) ubiquitin ligase complex inducing HSF1 degradation, and hence mitotic progression. Dephosphorylated on Ser-121, Ser-307, Ser-314 and Thr-323 by phosphatase PPP2CA in an IER5-dependent manner, leading to HSF1-mediated transactivation activity. Post-translationally, sumoylated with SUMO1 and SUMO2 upon heat shock in a ERK2-dependent manner. Sumoylated by SUMO1 on Lys-298; sumoylation occurs upon heat shock and promotes its localization to nuclear stress bodies and DNA-binding activity. Phosphorylation on Ser-303 and Ser-307 is probably a prerequisite for sumoylation. In terms of processing, acetylated on Lys-118; this acetylation is decreased in a IER5-dependent manner. Acetylated on Lys-118, Lys-208 and Lys-298; these acetylations occur in a EP300-dependent manner. Acetylated on Lys-80; this acetylation inhibits DNA-binding activity upon heat shock. Deacetylated on Lys-80 by SIRT1; this deacetylation increases DNA-binding activity. Ubiquitinated by SCF(BTRC) and degraded following stimulus-dependent phosphorylation at Ser-216 by PLK1 in mitosis. Polyubiquitinated. Undergoes proteasomal degradation upon heat shock and during the attenuation and recovery phase period of the heat shock response.

It is found in the nucleus. The protein localises to the cytoplasm. The protein resides in the nucleoplasm. It localises to the perinuclear region. Its subcellular location is the cytoskeleton. It is found in the spindle pole. The protein localises to the microtubule organizing center. The protein resides in the centrosome. It localises to the chromosome. Its subcellular location is the centromere. It is found in the kinetochore. Its function is as follows. Functions as a stress-inducible and DNA-binding transcription factor that plays a central role in the transcriptional activation of the heat shock response (HSR), leading to the expression of a large class of molecular chaperones, heat shock proteins (HSPs), that protect cells from cellular insult damage. In unstressed cells, is present in a HSP90-containing multichaperone complex that maintains it in a non-DNA-binding inactivated monomeric form. Upon exposure to heat and other stress stimuli, undergoes homotrimerization and activates HSP gene transcription through binding to site-specific heat shock elements (HSEs) present in the promoter regions of HSP genes. Upon heat shock stress, forms a chromatin-associated complex with TTC5/STRAP and p300/EP300 to stimulate HSR transcription, therefore increasing cell survival. Activation is reversible, and during the attenuation and recovery phase period of the HSR, returns to its unactivated form. Binds to inverted 5'-NGAAN-3' pentamer DNA sequences. Binds to chromatin at heat shock gene promoters. Activates transcription of transcription factor FOXR1 which in turn activates transcription of the heat shock chaperones HSPA1A and HSPA6 and the antioxidant NADPH-dependent reductase DHRS2. Binds the promoter region upstream of exon 1 of Mpv17l to activate expression of the M-LPS isoform which is involved in metabolism of reactive oxygen species. Also serves several other functions independently of its transcriptional activity. Involved in the repression of Ras-induced transcriptional activation of the c-fos gene in heat-stressed cells. Positively regulates pre-mRNA 3'-end processing and polyadenylation of HSP70 mRNA upon heat-stressed cells in a symplekin (SYMPK)-dependent manner. Plays a role in nuclear export of stress-induced HSP70 mRNA. Plays a role in the regulation of mitotic progression. Also plays a role as a negative regulator of non-homologous end joining (NHEJ) repair activity in a DNA damage-dependent manner. Involved in stress-induced cancer cell proliferation in a IER5-dependent manner. The polypeptide is Heat shock factor protein 1 (Mus musculus (Mouse)).